The chain runs to 256 residues: Thiazole synthase (256 aa).

The Schiff-base intermediate with DXP role is filled by K96. Residues G157, 184–185, and 206–207 contribute to the 1-deoxy-D-xylulose 5-phosphate site; these read AG and NT.

Belongs to the ThiG family. As to quaternary structure, homotetramer. Forms heterodimers with either ThiH or ThiS.

It is found in the cytoplasm. It catalyses the reaction [ThiS sulfur-carrier protein]-C-terminal-Gly-aminoethanethioate + 2-iminoacetate + 1-deoxy-D-xylulose 5-phosphate = [ThiS sulfur-carrier protein]-C-terminal Gly-Gly + 2-[(2R,5Z)-2-carboxy-4-methylthiazol-5(2H)-ylidene]ethyl phosphate + 2 H2O + H(+). It functions in the pathway cofactor biosynthesis; thiamine diphosphate biosynthesis. Functionally, catalyzes the rearrangement of 1-deoxy-D-xylulose 5-phosphate (DXP) to produce the thiazole phosphate moiety of thiamine. Sulfur is provided by the thiocarboxylate moiety of the carrier protein ThiS. In vitro, sulfur can be provided by H(2)S. This chain is Thiazole synthase, found in Brucella abortus (strain S19).